Reading from the N-terminus, the 107-residue chain is Small ribosomal subunit protein uS10 (107 aa).

Belongs to the universal ribosomal protein uS10 family. In terms of assembly, part of the 30S ribosomal subunit.

Functionally, involved in the binding of tRNA to the ribosomes. This chain is Small ribosomal subunit protein uS10, found in Deinococcus geothermalis (strain DSM 11300 / CIP 105573 / AG-3a).